A 372-amino-acid chain; its full sequence is Tetraacyldisaccharide 4'-kinase (372 aa).

Residue 60–67 (TVGGSGKT) participates in ATP binding.

Belongs to the LpxK family.

The catalysed reaction is a lipid A disaccharide + ATP = a lipid IVA + ADP + H(+). It participates in glycolipid biosynthesis; lipid IV(A) biosynthesis; lipid IV(A) from (3R)-3-hydroxytetradecanoyl-[acyl-carrier-protein] and UDP-N-acetyl-alpha-D-glucosamine: step 6/6. Functionally, transfers the gamma-phosphate of ATP to the 4'-position of a tetraacyldisaccharide 1-phosphate intermediate (termed DS-1-P) to form tetraacyldisaccharide 1,4'-bis-phosphate (lipid IVA). This is Tetraacyldisaccharide 4'-kinase from Psychrobacter cryohalolentis (strain ATCC BAA-1226 / DSM 17306 / VKM B-2378 / K5).